A 227-amino-acid chain; its full sequence is Apoptosis regulator OPG045 (227 aa).

The protein belongs to the orthopoxvirus OPG045 family. As to quaternary structure, homodimer. Interacts with host pro-apoptotic protein BCL2L11 (via BH3 domain). Interacts with host NLRP1. Interacts with host BAK.

It is found in the host mitochondrion outer membrane. The protein resides in the host cytoplasm. Plays a role in evading host innate immune response by inhibiting host inflammasome activation. Interacts with and inhibits NLR-mediated interleukin-1 beta/IL1B production in infected cells. At the host mitochondria outer membrane, interacts with the BH3 domain of host BAK and prevents BAK from binding active BAX. In turn, host apoptosis is inhibited. The chain is Apoptosis regulator OPG045 (OPG045) from Oryctolagus cuniculus (Rabbit).